A 338-amino-acid polypeptide reads, in one-letter code: Ribosomal RNA small subunit methyltransferase C (338 aa).

The protein belongs to the methyltransferase superfamily. RsmC family. In terms of assembly, monomer.

Its subcellular location is the cytoplasm. It carries out the reaction guanosine(1207) in 16S rRNA + S-adenosyl-L-methionine = N(2)-methylguanosine(1207) in 16S rRNA + S-adenosyl-L-homocysteine + H(+). In terms of biological role, specifically methylates the guanine in position 1207 of 16S rRNA in the 30S particle. In Acinetobacter baylyi (strain ATCC 33305 / BD413 / ADP1), this protein is Ribosomal RNA small subunit methyltransferase C.